Consider the following 212-residue polypeptide: Thymidylate kinase (212 aa).

13-20 serves as a coordination point for ATP; sequence GLEGAGKS.

The protein belongs to the thymidylate kinase family.

It carries out the reaction dTMP + ATP = dTDP + ADP. Phosphorylation of dTMP to form dTDP in both de novo and salvage pathways of dTTP synthesis. This is Thymidylate kinase from Legionella pneumophila (strain Paris).